The chain runs to 362 residues: MDTGVIEGGLNVTLTIRLLMHGKEVGSIIGKKGESVKKMREESGARINISEGNCPERIITLAGPTNAIFKAFAMIIDKLEEDISSSMTNSTAASRPPVTLRLVVPASQCGSLIGKGGCKIKEIRESTGAQVQVAGDMLPNSTERAITIAGIPQSIIECVKQICVVMLESPPKGVTIPYRPKPSSSPVIFAGGQDRYSTGSDSASFPHTTPSMCLNPDLEGPPLEAYTIQGQYAIPQPDLTKLHQLAMQQSHFPMTHGNTGFSGIESSSPEVKGYWAGLDASAQTTSHELTIPNDLIGCIIGRQGAKINEIRQMSGAQIKIANPVEGSTDRQVTITGSAASISLAQYLINVRLSSETGGMGSS.

KH domains are found at residues 13–75 and 97–162; these read TLTI…FAMI and PVTL…VKQI. Residue Lys-115 forms a Glycyl lysine isopeptide (Lys-Gly) (interchain with G-Cter in SUMO2) linkage. Ser-169 is subject to Phosphoserine. A Glycyl lysine isopeptide (Lys-Gly) (interchain with G-Cter in SUMO2) cross-link involves residue Lys-181. Ser-185 and Ser-268 each carry phosphoserine. One can recognise a KH 3 domain in the interval 284–348; it reads TTSHELTIPN…ASISLAQYLI (65 aa). Residue Lys-319 forms a Glycyl lysine isopeptide (Lys-Gly) (interchain with G-Cter in SUMO2) linkage. 2 positions are modified to phosphoserine: Ser-361 and Ser-362.

In terms of assembly, identified in a mRNP complex, at least composed of DHX9, DDX3X, ELAVL1, HNRNPU, IGF2BP1, ILF3, PABPC1, PCBP2, PTBP2, STAU1, STAU2, SYNCRIP and YBX1. Interacts with IFIH1 and RNF135. Interacts with MAVS (via C-terminus) and ITCH (via WW domains). Interacts with CGAS; preventing the formation of liquid-like droplets in which CGAS is activated. Post-translationally, phosphorylated. The non-phosphorylated form(s) exhibited the strongest poly(rC)-binding activity.

The protein resides in the nucleus. The protein localises to the cytoplasm. Single-stranded nucleic acid binding protein that binds preferentially to oligo dC. Major cellular poly(rC)-binding protein. Also binds poly(rU). Acts as a negative regulator of antiviral signaling. Negatively regulates cellular antiviral responses mediated by MAVS signaling. It acts as an adapter between MAVS and the E3 ubiquitin ligase ITCH, therefore triggering MAVS ubiquitination and degradation. Negativeley regulates the cGAS-STING pathway via interaction with CGAS, preventing the formation of liquid-like droplets in which CGAS is activated. Together with PCBP1, required for erythropoiesis, possibly by regulating mRNA splicing. This is Poly(rC)-binding protein 2 (Pcbp2) from Mus musculus (Mouse).